Here is a 97-residue protein sequence, read N- to C-terminus: uncharacterized protein (97 aa).

This is an uncharacterized protein from Archaeoglobus fulgidus (strain ATCC 49558 / DSM 4304 / JCM 9628 / NBRC 100126 / VC-16).